A 115-amino-acid chain; its full sequence is Anamorsin homolog 1 (115 aa).

The interval 30-115 (VKEATKGEDC…KVKLNLTDDI (86 aa)) is disordered. [2Fe-2S] cluster-binding residues include cysteine 39, cysteine 46, cysteine 49, and cysteine 51. Positions 39 to 51 (CTTRRRACKNCTC) are fe-S binding site A. [4Fe-4S] cluster contacts are provided by cysteine 77, cysteine 80, cysteine 88, and cysteine 91. Short sequence motifs (cx2C motif) lie at residues 77 to 80 (CGNC) and 88 to 91 (CATC). The tract at residues 77 to 91 (CGNCAKGDAFRCATC) is fe-S binding site B.

Belongs to the anamorsin family. In terms of assembly, monomer. [2Fe-2S] cluster is required as a cofactor. [4Fe-4S] cluster serves as cofactor.

It localises to the cytoplasm. The protein resides in the mitochondrion intermembrane space. In terms of biological role, component of the cytosolic iron-sulfur (Fe-S) protein assembly (CIA) machinery. Required for the maturation of extramitochondrial Fe-S proteins. Part of an electron transfer chain functioning in an early step of cytosolic Fe-S biogenesis, facilitating the de novo assembly of a [4Fe-4S] cluster on the cytosolic Fe-S scaffold complex. Electrons are transferred from NADPH via a FAD- and FMN-containing diflavin oxidoreductase. Together with the diflavin oxidoreductase, also required for the assembly of the diferric tyrosyl radical cofactor of ribonucleotide reductase (RNR), probably by providing electrons for reduction during radical cofactor maturation in the catalytic small subunit. This chain is Anamorsin homolog 1, found in Trypanosoma cruzi (strain CL Brener).